Here is a 250-residue protein sequence, read N- to C-terminus: MGRGRVQLKRIENKINRQVTFSKRRSGLLKKAHEISVLCDAEVGLIVFSTKGKLFEYATDSCMERLLERYERYSFAEKQLVPTDHTSPGSWTLENAKLKARLEVLQRNEKLYVGEDLESLNMKELQNLEHQLASALKHIRSRKNQLMHESISVLQKQDRALQEQNNQLSKKVKEREKEVEQQNQWDQQNHEINSSTFVLPQQLDSPHLGEASQNTNVVDNGEVEGGNSSQXQGAANNTVMPQWMVRHLNG.

Residues 3-57 (RGRVQLKRIENKINRQVTFSKRRSGLLKKAHEISVLCDAEVGLIVFSTKGKLFEY) form the MADS-box domain. The K-box domain occupies 88–178 (PGSWTLENAK…SKKVKEREKE (91 aa)). Disordered stretches follow at residues 162-191 (QEQN…QNHE) and 206-241 (PHLG…TVMP). Over residues 171–180 (KVKEREKEVE) the composition is skewed to basic and acidic residues. Polar residues-rich tracts occupy residues 181–191 (QQNQWDQQNHE) and 226–240 (GNSS…NTVM).

It is found in the nucleus. Probable transcription factor. The polypeptide is Agamous-like MADS-box protein AGL8 homolog (SCM1) (Solanum commersonii (Commerson's wild potato)).